Here is a 99-residue protein sequence, read N- to C-terminus: YcgL domain-containing protein HD_1373 (99 aa).

The YcgL domain occupies 8 to 92; it reads NFCAIYKSMS…PAENLLKQFL (85 aa).

This is YcgL domain-containing protein HD_1373 from Haemophilus ducreyi (strain 35000HP / ATCC 700724).